Here is a 248-residue protein sequence, read N- to C-terminus: Probable transcriptional regulatory protein FTM_1203 (248 aa).

This sequence belongs to the TACO1 family.

It localises to the cytoplasm. This is Probable transcriptional regulatory protein FTM_1203 from Francisella tularensis subsp. mediasiatica (strain FSC147).